Reading from the N-terminus, the 182-residue chain is A-type ATP synthase subunit E (182 aa).

The protein belongs to the V-ATPase E subunit family. As to quaternary structure, has multiple subunits with at least A(3), B(3), C, D, E, F, H, I and proteolipid K(x).

The protein localises to the cell membrane. Functionally, component of the A-type ATP synthase that produces ATP from ADP in the presence of a proton gradient across the membrane. The polypeptide is A-type ATP synthase subunit E (Methanothrix thermoacetophila (strain DSM 6194 / JCM 14653 / NBRC 101360 / PT) (Methanosaeta thermophila)).